Reading from the N-terminus, the 493-residue chain is EGF-containing fibulin-like extracellular matrix protein 1 (493 aa).

Positions 1–17 (MLQTLFLTMLTLALVKS) are cleaved as a signal peptide. The EGF-like 1; atypical domain maps to 26–71 (YTQCTDGYEWDPIRQQCKDIDECDIVPDACKGGMKCVNHYGGYLCL). Residues 173–213 (DIDECTSGTHNCRTDQVCINLRGSFTCQCLPGYQKRGEQCV) form the EGF-like 2; calcium-binding domain. 15 disulfides stabilise this stretch: C177-C190, C184-C199, C201-C212, C218-C228, C224-C237, C239-C252, C258-C268, C264-C277, C279-C292, C298-C309, C305-C318, C320-C332, C338-C350, C344-C359, and C365-C377. The region spanning 214–253 (DIDECTVPPYCHQRCVNTPGSFYCQCSPGFQLAANNYTCV) is the EGF-like 3; calcium-binding domain. N-linked (GlcNAc...) asparagine glycosylation occurs at N249. In terms of domain architecture, EGF-like 4; calcium-binding spans 254 to 293 (DINECDASNQCAQQCYNILGSFICQCNQGYELSSDRLNCE). The segment at 259 to 493 (DASNQCAQQC…LTIIVGPFSF (235 aa)) is mediates interaction with TIMP3. The 40-residue stretch at 294-333 (DIDECRTSSYLCQYQCVNEPGKFSCMCPQGYEVVRSRTCQ) folds into the EGF-like 5; calcium-binding domain. In terms of domain architecture, EGF-like 6; calcium-binding spans 334-378 (DINECETTNECREDEMCWNYHGGFRCYPRNPCQDHYVLTSENRCV).

Belongs to the fibulin family. Interacts with ECM1. Interacts with TIMP3. In terms of tissue distribution, expressed in the eye in the ciliary body, cornea, inner nuclear layer of the retina, and in the optic disk.

It localises to the secreted. It is found in the extracellular space. The protein localises to the extracellular matrix. In terms of biological role, binds EGFR, the EGF receptor, inducing EGFR autophosphorylation and the activation of downstream signaling pathways. May play a role in cell adhesion and migration. May function as a negative regulator of chondrocyte differentiation. In the olfactory epithelium, it may regulate glial cell migration, differentiation and the ability of glial cells to support neuronal neurite outgrowth. This Mus musculus (Mouse) protein is EGF-containing fibulin-like extracellular matrix protein 1 (Efemp1).